The primary structure comprises 305 residues: MKKIIFMGTPSYATCILKALVENENFKLVALFTQPDKAVGRKQILTPSDTKAFLSQNYPSIPIFTPSSLKDKNIIREIKDLNPDFIVVAAYGKILPKAILDLAPCVNLHASLLPKYRGASPIQSAILNKDEKSGVCTMLMEEGLDTGAILESLECDIKDKNSSEVFELLANLAAKLILSTLLNFDKITPKKQEESLATLCRKIKKEDGLINLQNARELYQKYLAFTPWPGVFLENGLKFLELELVDELKQNAKMGEILELEKESFLLACKQGVLRIKKLQESGKKALDGRTYLNGKRLKSEDSLC.

111 to 114 (SLLP) is a (6S)-5,6,7,8-tetrahydrofolate binding site.

It belongs to the Fmt family.

It carries out the reaction L-methionyl-tRNA(fMet) + (6R)-10-formyltetrahydrofolate = N-formyl-L-methionyl-tRNA(fMet) + (6S)-5,6,7,8-tetrahydrofolate + H(+). Its function is as follows. Attaches a formyl group to the free amino group of methionyl-tRNA(fMet). The formyl group appears to play a dual role in the initiator identity of N-formylmethionyl-tRNA by promoting its recognition by IF2 and preventing the misappropriation of this tRNA by the elongation apparatus. This is Methionyl-tRNA formyltransferase from Campylobacter jejuni (strain RM1221).